Consider the following 476-residue polypeptide: WD repeat, SAM and U-box domain-containing protein 1 (476 aa).

WD repeat units follow at residues 10-47, 52-91, 95-134, 137-176, 178-228, 237-276, and 279-318; these read DHGD…ELPH, FHTY…MLAV, PSGS…LYRC, VKDG…LHSE, AHDL…LGFE, GHCA…ILHT, and QHTR…LCQA. An SAM domain is found at 332 to 396; sequence WSEEDVSTWL…LRKIEELRTK (65 aa). Residues 403–476 enclose the U-box domain; that stretch reads GIPDEFICPI…INRWLETHQK (74 aa). The residue at position 458 (Thr458) is a Phosphothreonine.

The polypeptide is WD repeat, SAM and U-box domain-containing protein 1 (WDSUB1) (Homo sapiens (Human)).